The sequence spans 461 residues: Fumarate hydratase class II (461 aa).

Substrate-binding positions include 99 to 101 (SGT), 130 to 133 (HPND), 140 to 142 (STN), and Thr188. The active-site Proton donor/acceptor is the His189. Ser319 is an active-site residue. Residues Ser320 and 325–327 (KVN) each bind substrate.

Belongs to the class-II fumarase/aspartase family. Fumarase subfamily. In terms of assembly, homotetramer.

Its subcellular location is the cytoplasm. It catalyses the reaction (S)-malate = fumarate + H2O. The protein operates within carbohydrate metabolism; tricarboxylic acid cycle; (S)-malate from fumarate: step 1/1. Functionally, involved in the TCA cycle. Catalyzes the stereospecific interconversion of fumarate to L-malate. The polypeptide is Fumarate hydratase class II (Prochlorococcus marinus subsp. pastoris (strain CCMP1986 / NIES-2087 / MED4)).